The primary structure comprises 105 residues: Met repressor (105 aa).

This sequence belongs to the MetJ family. As to quaternary structure, homodimer.

It is found in the cytoplasm. In terms of biological role, this regulatory protein, when combined with SAM (S-adenosylmethionine) represses the expression of the methionine regulon and of enzymes involved in SAM synthesis. This Photorhabdus laumondii subsp. laumondii (strain DSM 15139 / CIP 105565 / TT01) (Photorhabdus luminescens subsp. laumondii) protein is Met repressor.